The sequence spans 829 residues: Leucine--tRNA ligase (829 aa).

A 'HIGH' region motif is present at residues 42–52 (PYPSGNLHMGH). Positions 582–586 (KMSKS) match the 'KMSKS' region motif. An ATP-binding site is contributed by Lys-585.

The protein belongs to the class-I aminoacyl-tRNA synthetase family.

It is found in the cytoplasm. It carries out the reaction tRNA(Leu) + L-leucine + ATP = L-leucyl-tRNA(Leu) + AMP + diphosphate. The polypeptide is Leucine--tRNA ligase (Moorella thermoacetica (strain ATCC 39073 / JCM 9320)).